The sequence spans 445 residues: Glutamate--tRNA ligase 2 (445 aa).

A 'HIGH' region motif is present at residues 10-20 (PSPTGMLHVGN). A 'KMSKS' region motif is present at residues 240–244 (KISKR). Lys-243 contributes to the ATP binding site.

The protein belongs to the class-I aminoacyl-tRNA synthetase family. Glutamate--tRNA ligase type 1 subfamily. Monomer.

It is found in the cytoplasm. The catalysed reaction is tRNA(Glu) + L-glutamate + ATP = L-glutamyl-tRNA(Glu) + AMP + diphosphate. Catalyzes the attachment of glutamate to tRNA(Glu) in a two-step reaction: glutamate is first activated by ATP to form Glu-AMP and then transferred to the acceptor end of tRNA(Glu). In Rickettsia canadensis (strain McKiel), this protein is Glutamate--tRNA ligase 2.